The chain runs to 337 residues: 25S rRNA (adenine(2142)-N(1))-methyltransferase (337 aa).

The S-adenosyl-L-methionine site is built by Gly180 and Asp201.

This sequence belongs to the BMT2 family.

The protein resides in the nucleus. Its subcellular location is the nucleolus. The catalysed reaction is adenosine(2142) in 25S rRNA + S-adenosyl-L-methionine = N(1)-methyladenosine(2142) in 25S rRNA + S-adenosyl-L-homocysteine + H(+). S-adenosyl-L-methionine-dependent methyltransferase that specifically methylates the N(1) position of adenine 2142 in 25S rRNA. N(1)-methyladenine(2142) in 25S rRNA is present in helix 65, a region that accounts for most of the intersubunit surface of the large subunit. This Saccharomyces cerevisiae (strain ATCC 204508 / S288c) (Baker's yeast) protein is 25S rRNA (adenine(2142)-N(1))-methyltransferase.